The primary structure comprises 166 residues: Vasopressin-neurophysin 2-copeptin (166 aa).

Residues 1–19 form the signal peptide; it reads MPDATLPACFLGLLALTSA. An intrachain disulfide couples Cys20 to Cys25. Gly28 carries the glycine amide modification. 7 cysteine pairs are disulfide-bonded: Cys41-Cys85, Cys44-Cys58, Cys52-Cys75, Cys59-Cys65, Cys92-Cys104, Cys98-Cys116, and Cys105-Cys110. The N-linked (GlcNAc...) asparagine glycan is linked to Asn133.

This sequence belongs to the vasopressin/oxytocin family. As to quaternary structure, interacts with vasopressin receptors V1bR/AVPR1B (Ki=85 pM), V1aR/AVPR1A (Ki=0.6 nM) and V2R/AVPR2 (Ki=4.9 nM). Interacts with oxytocin receptor (OXTR) (Ki=110 nM). In terms of processing, a shorter neurophysin molecule (32-123) is called neurophysin-I and is derived from the complete protein (called neurophysin III) by proteolytic degradation (in vivo or after extraction).

It is found in the secreted. Functionally, neurophysin 2 specifically binds vasopressin. Vasopressin has a direct antidiuretic action on the kidney, it also causes vasoconstriction of the peripheral vessels. Acts by binding to vasopressin receptors (V1bR/AVPR1B, V1aR/AVPR1A, and V2R/AVPR2). This Sus scrofa (Pig) protein is Vasopressin-neurophysin 2-copeptin (AVP).